A 96-amino-acid chain; its full sequence is Co-chaperonin GroES (96 aa).

It belongs to the GroES chaperonin family. As to quaternary structure, heptamer of 7 subunits arranged in a ring. Interacts with the chaperonin GroEL.

Its subcellular location is the cytoplasm. Together with the chaperonin GroEL, plays an essential role in assisting protein folding. The GroEL-GroES system forms a nano-cage that allows encapsulation of the non-native substrate proteins and provides a physical environment optimized to promote and accelerate protein folding. GroES binds to the apical surface of the GroEL ring, thereby capping the opening of the GroEL channel. The polypeptide is Co-chaperonin GroES (Methylibium petroleiphilum (strain ATCC BAA-1232 / LMG 22953 / PM1)).